A 541-amino-acid chain; its full sequence is Glucose-6-phosphate isomerase (541 aa).

E346 serves as the catalytic Proton donor. Residues H377 and K506 contribute to the active site.

This sequence belongs to the GPI family.

It localises to the cytoplasm. It catalyses the reaction alpha-D-glucose 6-phosphate = beta-D-fructose 6-phosphate. It functions in the pathway carbohydrate biosynthesis; gluconeogenesis. It participates in carbohydrate degradation; glycolysis; D-glyceraldehyde 3-phosphate and glycerone phosphate from D-glucose: step 2/4. Its function is as follows. Catalyzes the reversible isomerization of glucose-6-phosphate to fructose-6-phosphate. This is Glucose-6-phosphate isomerase from Rhizobium rhizogenes (strain K84 / ATCC BAA-868) (Agrobacterium radiobacter).